The following is a 384-amino-acid chain: Spermidine/putrescine import ATP-binding protein PotA (384 aa).

The ABC transporter domain occupies 6–238; the sequence is ITFNNVSKTF…PINHFVANFI (233 aa). 40–47 contributes to the ATP binding site; sequence GASGSGKS.

The protein belongs to the ABC transporter superfamily. Spermidine/putrescine importer (TC 3.A.1.11.1) family. In terms of assembly, the complex is composed of two ATP-binding proteins (PotA), two transmembrane proteins (PotB and PotC) and a solute-binding protein (PotD).

The protein localises to the cell membrane. It catalyses the reaction ATP + H2O + polyamine-[polyamine-binding protein]Side 1 = ADP + phosphate + polyamineSide 2 + [polyamine-binding protein]Side 1.. Its function is as follows. Part of the ABC transporter complex PotABCD involved in spermidine/putrescine import. Responsible for energy coupling to the transport system. The polypeptide is Spermidine/putrescine import ATP-binding protein PotA (Streptococcus pyogenes serotype M12 (strain MGAS2096)).